The primary structure comprises 179 residues: Bifunctional protein PyrR (179 aa).

Positions 97–109 (VILIDDVLFTGRT) match the PRPP-binding motif.

The protein belongs to the purine/pyrimidine phosphoribosyltransferase family. PyrR subfamily.

The catalysed reaction is UMP + diphosphate = 5-phospho-alpha-D-ribose 1-diphosphate + uracil. In terms of biological role, regulates the transcription of the pyrimidine nucleotide (pyr) operon in response to exogenous pyrimidines. Functionally, also displays a weak uracil phosphoribosyltransferase activity which is not physiologically significant. The polypeptide is Bifunctional protein PyrR (Actinobacillus pleuropneumoniae serotype 5b (strain L20)).